The chain runs to 411 residues: LIM domain-binding protein 1 (411 aa).

Disordered regions lie at residues 284–330 (PPAE…TFAL) and 367–411 (DAAN…QASQ). Residues 302 to 318 (SGGSTMSSGGGNTNNSN) are compositionally biased toward low complexity. An LIM interaction domain (LID) domain is found at 336–375 (DVMVVGEPTLMGGEFGDEDERLITRLENTQFDAANGIDDE).

This sequence belongs to the LDB family. In terms of assembly, forms homodimers and heterodimers. First expressed at stages 15-16 in presumptive limb mesoderm. As limb outgrowth proceeds, expressed in the entire limb bud, concentrating in the distal mesoderm throughout limb development. Both hindlimbs and forelimbs exhibit similar expression patterns.

It is found in the nucleus. In terms of biological role, binds to the LIM domain of a wide variety of LIM domain-containing transcription factors. In Gallus gallus (Chicken), this protein is LIM domain-binding protein 1.